The chain runs to 135 residues: Small ribosomal subunit protein bS16 (135 aa).

Positions Arg-82–Gly-135 are disordered. The segment covering Ala-94 to Glu-121 has biased composition (basic and acidic residues). Residues Glu-123–Gly-135 show a composition bias toward acidic residues.

The protein belongs to the bacterial ribosomal protein bS16 family.

This chain is Small ribosomal subunit protein bS16, found in Synechococcus sp. (strain CC9605).